A 147-amino-acid polypeptide reads, in one-letter code: Allograft inflammatory factor 1 (147 aa).

Position 2 is an N-acetylserine (S2). An N6-acetyllysine modification is found at K11. S39 carries the post-translational modification Phosphoserine. In terms of domain architecture, EF-hand 1 spans 45-80; sequence SKLEAFKKKYMEFDLNEDGGIDIMSLKRMMEKLGVP. Positions 58, 60, and 62 each coordinate Ca(2+). The 35-residue stretch at 81–115 folds into the EF-hand 2; degenerate domain; that stretch reads KTHLELKKLIMEVSSGPGETFSYSDFLKMMLGKRS. The interval 128-147 is disordered; that stretch reads AREQEKPTGLPAKKAISELP.

Phosphorylated on serine residues.

The protein localises to the cytoplasm. The protein resides in the cytoskeleton. Its subcellular location is the cell projection. It localises to the ruffle membrane. It is found in the phagocytic cup. Its function is as follows. May play a role in macrophage activation and function. This is Allograft inflammatory factor 1 (AIF1) from Bos taurus (Bovine).